Consider the following 702-residue polypeptide: Polyribonucleotide nucleotidyltransferase 3 (702 aa).

The Mg(2+) site is built by aspartate 483 and aspartate 489. Residues 550–609 (PKVTQIKVHPDKVREVIGAGGKVINKIIDETGCKITIENDGTIYVAAPDQESSRRAVEMI) enclose the KH domain. The S1 motif domain maps to 619–687 (GEVYTGKVIK…PQGKIGLSRK (69 aa)).

It belongs to the polyribonucleotide nucleotidyltransferase family. Mg(2+) is required as a cofactor.

Its subcellular location is the cytoplasm. The enzyme catalyses RNA(n+1) + phosphate = RNA(n) + a ribonucleoside 5'-diphosphate. Functionally, involved in mRNA degradation. Catalyzes the phosphorolysis of single-stranded polyribonucleotides processively in the 3'- to 5'-direction. In Alkaliphilus metalliredigens (strain QYMF), this protein is Polyribonucleotide nucleotidyltransferase 3.